Reading from the N-terminus, the 73-residue chain is Large ribosomal subunit protein bL31 (73 aa).

Residues Cys16, Cys18, Cys37, and Cys40 each contribute to the Zn(2+) site.

Belongs to the bacterial ribosomal protein bL31 family. Type A subfamily. As to quaternary structure, part of the 50S ribosomal subunit. Requires Zn(2+) as cofactor.

Functionally, binds the 23S rRNA. The sequence is that of Large ribosomal subunit protein bL31 from Pseudomonas savastanoi pv. phaseolicola (strain 1448A / Race 6) (Pseudomonas syringae pv. phaseolicola (strain 1448A / Race 6)).